Here is a 468-residue protein sequence, read N- to C-terminus: 5-carboxymethyl-2-hydroxymuconate semialdehyde dehydrogenase (468 aa).

Glu244 is an active-site residue. Cys278 functions as the Nucleophile in the catalytic mechanism.

This sequence belongs to the aldehyde dehydrogenase family. In terms of assembly, homodimer.

It catalyses the reaction 2-hydroxy-5-carboxymethylmuconate semialdehyde + NAD(+) + H2O = (2E,4Z)-5-hydroxypenta-2,4-diene-1,2,5-tricarboxylate + NADH + 2 H(+). The protein operates within aromatic compound metabolism; 4-hydroxyphenylacetate degradation; pyruvate and succinate semialdehyde from 4-hydroxyphenylacetate: step 3/7. Functionally, catalyzes the conversion of 5-carboxymethyl-2-hydroxy-muconic semialdehyde (CHMS) into 5-carboxymethyl-2-hydroxy-muconic acid (CHM or (2E,4Z)-5-hydroxypenta-2,4-diene-1,2,5-tricarboxylate). Is involved in a meta-cleavage pathway for the catabolism of 4-hydroxyphenylacetate (4-HPA) via homoprotocatechuate (HPC or 3,4-dihydroxyphenylacetate). This is 5-carboxymethyl-2-hydroxymuconate semialdehyde dehydrogenase from Escherichia coli.